We begin with the raw amino-acid sequence, 400 residues long: Argininosuccinate synthase (400 aa).

8-16 is an ATP binding site; that stretch reads AYSGGLDTS. L-citrulline-binding residues include Tyr-87 and Ser-92. Gly-117 provides a ligand contact to ATP. Residues Thr-119, Asn-123, and Asp-124 each contribute to the L-aspartate site. Residue Asn-123 participates in L-citrulline binding. Arg-127, Ser-175, Glu-259, and Tyr-271 together coordinate L-citrulline.

This sequence belongs to the argininosuccinate synthase family. Type 1 subfamily. As to quaternary structure, homotetramer.

The protein localises to the cytoplasm. The catalysed reaction is L-citrulline + L-aspartate + ATP = 2-(N(omega)-L-arginino)succinate + AMP + diphosphate + H(+). It participates in amino-acid biosynthesis; L-arginine biosynthesis; L-arginine from L-ornithine and carbamoyl phosphate: step 2/3. The polypeptide is Argininosuccinate synthase (Frankia casuarinae (strain DSM 45818 / CECT 9043 / HFP020203 / CcI3)).